A 131-amino-acid chain; its full sequence is Ribosome-binding factor A (131 aa).

This sequence belongs to the RbfA family. As to quaternary structure, monomer. Binds 30S ribosomal subunits, but not 50S ribosomal subunits or 70S ribosomes.

It localises to the cytoplasm. One of several proteins that assist in the late maturation steps of the functional core of the 30S ribosomal subunit. Associates with free 30S ribosomal subunits (but not with 30S subunits that are part of 70S ribosomes or polysomes). Required for efficient processing of 16S rRNA. May interact with the 5'-terminal helix region of 16S rRNA. The chain is Ribosome-binding factor A from Ruegeria sp. (strain TM1040) (Silicibacter sp.).